The following is a 131-amino-acid chain: Methylglyoxal synthase (131 aa).

The region spanning 1–131 (MKIALIAHDK…GDLDYRKLRK (131 aa)) is the MGS-like domain. Substrate-binding positions include His8, Lys12, 34–37 (TGTT), and 54–55 (SG). Catalysis depends on Asp60, which acts as the Proton donor/acceptor. His87 provides a ligand contact to substrate.

Belongs to the methylglyoxal synthase family.

The catalysed reaction is dihydroxyacetone phosphate = methylglyoxal + phosphate. In terms of biological role, catalyzes the formation of methylglyoxal from dihydroxyacetone phosphate. In Bacillus mycoides (strain KBAB4) (Bacillus weihenstephanensis), this protein is Methylglyoxal synthase.